We begin with the raw amino-acid sequence, 244 residues long: uncharacterized protein (244 aa).

The segment at 30 to 49 is disordered; that stretch reads RETNESPKSQNPSEEATTVN. A compositionally biased stretch (polar residues) spans 35 to 49; sequence SPKSQNPSEEATTVN. The next 4 helical transmembrane spans lie at 96-116, 128-148, 171-191, and 194-214; these read LWGTCVILSTLFWSYYVLSNS, LLFILIIALDALLTVSLFGLF, GFFINVLSTMVQALVTVTIAF, and FVTIDFPIYVFSSLFLYHPLS. The segment at 224–244 is disordered; it reads QLDGSGERKTDSSLVHQNPPN. Residues 235–244 are compositionally biased toward polar residues; it reads SSLVHQNPPN.

The protein resides in the nucleus membrane. This is an uncharacterized protein from Schizosaccharomyces pombe (strain 972 / ATCC 24843) (Fission yeast).